Here is a 393-residue protein sequence, read N- to C-terminus: Phosphatidate cytidylyltransferase (393 aa).

The next 8 membrane-spanning stretches (helical) occupy residues Asn49–Val69, Ile73–Ile93, Ile108–Met128, Leu141–Arg161, Leu171–Phe191, Phe198–Gly218, Gly237–Val257, and Ile290–Ala310.

It belongs to the CDS family.

The protein localises to the membrane. The enzyme catalyses a 1,2-diacyl-sn-glycero-3-phosphate + CTP + H(+) = a CDP-1,2-diacyl-sn-glycerol + diphosphate. It functions in the pathway phospholipid metabolism; CDP-diacylglycerol biosynthesis; CDP-diacylglycerol from sn-glycerol 3-phosphate: step 3/3. This chain is Phosphatidate cytidylyltransferase (CDS1), found in Encephalitozoon cuniculi (strain GB-M1) (Microsporidian parasite).